The following is a 316-amino-acid chain: N-acetyl-gamma-glutamyl-phosphate reductase (316 aa).

Residue C136 is part of the active site.

This sequence belongs to the NAGSA dehydrogenase family. Type 1 subfamily.

It is found in the cytoplasm. It carries out the reaction N-acetyl-L-glutamate 5-semialdehyde + phosphate + NADP(+) = N-acetyl-L-glutamyl 5-phosphate + NADPH + H(+). It participates in amino-acid biosynthesis; L-arginine biosynthesis; N(2)-acetyl-L-ornithine from L-glutamate: step 3/4. Catalyzes the NADPH-dependent reduction of N-acetyl-5-glutamyl phosphate to yield N-acetyl-L-glutamate 5-semialdehyde. The protein is N-acetyl-gamma-glutamyl-phosphate reductase of Xanthomonas oryzae pv. oryzae (strain MAFF 311018).